We begin with the raw amino-acid sequence, 283 residues long: Probable endonuclease 4 (283 aa).

Residues H69, H109, E145, D179, H182, H216, D229, H231, and E261 each contribute to the Zn(2+) site.

The protein belongs to the AP endonuclease 2 family. It depends on Zn(2+) as a cofactor.

It carries out the reaction Endonucleolytic cleavage to 5'-phosphooligonucleotide end-products.. Functionally, endonuclease IV plays a role in DNA repair. It cleaves phosphodiester bonds at apurinic or apyrimidinic (AP) sites, generating a 3'-hydroxyl group and a 5'-terminal sugar phosphate. The polypeptide is Probable endonuclease 4 (Prosthecochloris aestuarii (strain DSM 271 / SK 413)).